The following is a 414-amino-acid chain: Protein IQ-DOMAIN 8 (414 aa).

The Nuclear localization signal 1 motif lies at Asn14–Asp21. Residues Leu40–Ser61 form a disordered region. 3 IQ domains span residues Arg92 to Arg120, Ile121 to Ala143, and Leu144 to Ser169. Residues Val119–Lys132 are calmodulin-binding. Disordered stretches follow at residues Asn156 to Ser190, His218 to Ser244, and Gly262 to Phe329. Residues Glu164 to Trp184 show a composition bias toward basic and acidic residues. Residues Lys231–Ser244 show a composition bias toward polar residues. The span at Asn274–Gln289 shows a compositional bias: basic and acidic residues. Residues Ser307–Ser328 show a composition bias toward low complexity. Positions Tyr336–Ser343 match the Nuclear localization signal 2 motif. A disordered region spans residues Ser347 to Pro398.

It belongs to the IQD family. Binds to multiple calmodulin (CaM) in the presence of Ca(2+) and CaM-like proteins.

The protein localises to the nucleus. It is found in the cytoplasm. The protein resides in the cytoskeleton. It localises to the nucleus envelope. Its function is as follows. May be involved in cooperative interactions with calmodulins or calmodulin-like proteins. Recruits calmodulin proteins to microtubules, thus being a potential scaffold in cellular signaling and trafficking. May associate with nucleic acids and regulate gene expression at the transcriptional or post-transcriptional level. This chain is Protein IQ-DOMAIN 8, found in Arabidopsis thaliana (Mouse-ear cress).